Reading from the N-terminus, the 393-residue chain is NAD(P)H-quinone oxidoreductase subunit H, chloroplastic (393 aa).

Belongs to the complex I 49 kDa subunit family. NDH is composed of at least 16 different subunits, 5 of which are encoded in the nucleus.

The protein resides in the plastid. Its subcellular location is the chloroplast thylakoid membrane. The enzyme catalyses a plastoquinone + NADH + (n+1) H(+)(in) = a plastoquinol + NAD(+) + n H(+)(out). It carries out the reaction a plastoquinone + NADPH + (n+1) H(+)(in) = a plastoquinol + NADP(+) + n H(+)(out). NDH shuttles electrons from NAD(P)H:plastoquinone, via FMN and iron-sulfur (Fe-S) centers, to quinones in the photosynthetic chain and possibly in a chloroplast respiratory chain. The immediate electron acceptor for the enzyme in this species is believed to be plastoquinone. Couples the redox reaction to proton translocation, and thus conserves the redox energy in a proton gradient. This Gossypium barbadense (Sea Island cotton) protein is NAD(P)H-quinone oxidoreductase subunit H, chloroplastic.